The sequence spans 185 residues: Orotate phosphoribosyltransferase (185 aa).

5-phospho-alpha-D-ribose 1-diphosphate contacts are provided by residues Arg-98, Lys-99, Lys-102, His-104, and 128-136; that span reads EDVTTTGGS. Residues Thr-132 and Arg-160 each coordinate orotate.

Belongs to the purine/pyrimidine phosphoribosyltransferase family. PyrE subfamily. Homodimer. Mg(2+) serves as cofactor.

It catalyses the reaction orotidine 5'-phosphate + diphosphate = orotate + 5-phospho-alpha-D-ribose 1-diphosphate. It participates in pyrimidine metabolism; UMP biosynthesis via de novo pathway; UMP from orotate: step 1/2. Functionally, catalyzes the transfer of a ribosyl phosphate group from 5-phosphoribose 1-diphosphate to orotate, leading to the formation of orotidine monophosphate (OMP). The protein is Orotate phosphoribosyltransferase of Bradyrhizobium sp. (strain ORS 278).